The following is a 218-amino-acid chain: MSDNDELQQIAHLRREYTKGGLRRRDLPAEPLTLFERWLSQACDAKLADPTAMVVATVDEHGQPYQRIVLLKHYDEKGMVFYTNLGSRKAHQIENNPRVSLLFPWHTLERQVMVIGKAERLSTLEVMKYFHSRPRDSQIGAWVSKQSSRISARGILESKFLELKQKFQQGEVPLPSFWGGFRVSLEQIEFWQGGEHRLHDRFLYQRENDAWKIDRLAP.

Substrate is bound by residues 14–17 (RREY) and Lys-72. FMN is bound by residues 67–72 (RIVLLK), 82–83 (YT), Arg-88, Lys-89, and Gln-111. Substrate contacts are provided by Tyr-129, Arg-133, and Ser-137. FMN is bound by residues 146–147 (QS) and Trp-191. 197–199 (RLH) contributes to the substrate binding site. Arg-201 is a binding site for FMN.

This sequence belongs to the pyridoxamine 5'-phosphate oxidase family. As to quaternary structure, homodimer. It depends on FMN as a cofactor.

It carries out the reaction pyridoxamine 5'-phosphate + O2 + H2O = pyridoxal 5'-phosphate + H2O2 + NH4(+). The catalysed reaction is pyridoxine 5'-phosphate + O2 = pyridoxal 5'-phosphate + H2O2. It functions in the pathway cofactor metabolism; pyridoxal 5'-phosphate salvage; pyridoxal 5'-phosphate from pyridoxamine 5'-phosphate: step 1/1. It participates in cofactor metabolism; pyridoxal 5'-phosphate salvage; pyridoxal 5'-phosphate from pyridoxine 5'-phosphate: step 1/1. Catalyzes the oxidation of either pyridoxine 5'-phosphate (PNP) or pyridoxamine 5'-phosphate (PMP) into pyridoxal 5'-phosphate (PLP). The chain is Pyridoxine/pyridoxamine 5'-phosphate oxidase from Escherichia coli O7:K1 (strain IAI39 / ExPEC).